Here is a 66-residue protein sequence, read N- to C-terminus: DNA-directed RNA polymerase subunit Rpo10 (66 aa).

The Zn(2+) site is built by cysteine 7, cysteine 10, cysteine 44, and cysteine 45.

It belongs to the archaeal Rpo10/eukaryotic RPB10 RNA polymerase subunit family. Part of the RNA polymerase complex. Zn(2+) serves as cofactor.

It is found in the cytoplasm. The catalysed reaction is RNA(n) + a ribonucleoside 5'-triphosphate = RNA(n+1) + diphosphate. In terms of biological role, DNA-dependent RNA polymerase (RNAP) catalyzes the transcription of DNA into RNA using the four ribonucleoside triphosphates as substrates. The polypeptide is DNA-directed RNA polymerase subunit Rpo10 (Pyrobaculum neutrophilum (strain DSM 2338 / JCM 9278 / NBRC 100436 / V24Sta) (Thermoproteus neutrophilus)).